The primary structure comprises 140 residues: uncharacterized protein (140 aa).

Tandem repeats lie at residues Met1–Glu10, Thr11–Glu20, Thr21–Glu30, Thr31–Glu40, Thr41–Glu50, Thr51–Glu60, Met61–Glu70, Thr71–Glu80, Thr81–Glu90, Met91–Glu100, Thr101–Glu110, Met111–Glu120, Met121–Glu130, and Met131–Thr140. The interval Met1–Thr140 is 14 X 10 AA tandem repeats of [MT]-F-[AG]-R-L-[CS]-P-V-[SI]-[ET].

This is an uncharacterized protein from Homo sapiens (Human).